Reading from the N-terminus, the 168-residue chain is UPF0478 protein SH1183 (168 aa).

The chain crosses the membrane as a helical span at residues 7–27; sequence IAGIIAAIAFLVLCIGIVVVL. The tract at residues 144–168 is disordered; the sequence is YRNTSVGNDANHSNENYTTNVEKNF.

It belongs to the UPF0478 family.

It localises to the cell membrane. This Staphylococcus haemolyticus (strain JCSC1435) protein is UPF0478 protein SH1183.